The chain runs to 261 residues: Glutathione S-transferase theta-1 (261 aa).

The GST N-terminal domain occupies 2-101 (GLELYLDLLS…YLSRKYNTPD (100 aa)). Residues 72 to 73 (KV) and 85 to 86 (EC) each bind glutathione. The 142-residue stretch at 107–248 (DIKKRAQVDE…LSNIQIDPQL (142 aa)) folds into the GST C-terminal domain.

It belongs to the GST superfamily. Theta family. As to quaternary structure, homodimer.

The protein resides in the cytoplasm. It carries out the reaction RX + glutathione = an S-substituted glutathione + a halide anion + H(+). In terms of biological role, conjugation of reduced glutathione to a wide number of exogenous and endogenous hydrophobic electrophiles. This chain is Glutathione S-transferase theta-1 (GSTT1), found in Gallus gallus (Chicken).